Consider the following 296-residue polypeptide: 4-hydroxy-tetrahydrodipicolinate synthase (296 aa).

T49 is a binding site for pyruvate. Y137 acts as the Proton donor/acceptor in catalysis. K166 acts as the Schiff-base intermediate with substrate in catalysis. Residue I208 coordinates pyruvate.

The protein belongs to the DapA family. As to quaternary structure, homotetramer; dimer of dimers.

It localises to the cytoplasm. It carries out the reaction L-aspartate 4-semialdehyde + pyruvate = (2S,4S)-4-hydroxy-2,3,4,5-tetrahydrodipicolinate + H2O + H(+). Its pathway is amino-acid biosynthesis; L-lysine biosynthesis via DAP pathway; (S)-tetrahydrodipicolinate from L-aspartate: step 3/4. Functionally, catalyzes the condensation of (S)-aspartate-beta-semialdehyde [(S)-ASA] and pyruvate to 4-hydroxy-tetrahydrodipicolinate (HTPA). The polypeptide is 4-hydroxy-tetrahydrodipicolinate synthase (Azobacteroides pseudotrichonymphae genomovar. CFP2).